A 67-amino-acid chain; its full sequence is ATP synthase protein 8 (67 aa).

Residues 8-24 (TWFTTVLSTTITLFILM) traverse the membrane as a helical segment. At Lys-54 the chain carries N6-acetyllysine; alternate. An N6-succinyllysine; alternate modification is found at Lys-54. Lys-57 is subject to N6-acetyllysine.

Belongs to the ATPase protein 8 family. As to quaternary structure, F-type ATPases have 2 components, CF(1) - the catalytic core - and CF(0) - the membrane proton channel. Component of an ATP synthase complex composed of ATP5PB, ATP5MC1, ATP5F1E, ATP5PD, ATP5ME, ATP5PF, ATP5MF, MT-ATP6, MT-ATP8, ATP5F1A, ATP5F1B, ATP5F1D, ATP5F1C, ATP5PO, ATP5MG, ATP5MK and ATP5MJ. Interacts with PRICKLE3.

It is found in the mitochondrion membrane. In terms of biological role, mitochondrial membrane ATP synthase (F(1)F(0) ATP synthase or Complex V) produces ATP from ADP in the presence of a proton gradient across the membrane which is generated by electron transport complexes of the respiratory chain. F-type ATPases consist of two structural domains, F(1) - containing the extramembraneous catalytic core and F(0) - containing the membrane proton channel, linked together by a central stalk and a peripheral stalk. During catalysis, ATP synthesis in the catalytic domain of F(1) is coupled via a rotary mechanism of the central stalk subunits to proton translocation. Part of the complex F(0) domain. Minor subunit located with subunit a in the membrane. The sequence is that of ATP synthase protein 8 (MT-ATP8) from Microtus pennsylvanicus (Meadow vole).